The primary structure comprises 343 residues: MRRFFYRHSRGVTEVVVGSGLQYGDYVERPVVLAEEGLRPPIPGAPTLALRGGEEVKSLEVLTKVYGFLKEVGADRSTTLVAVGGGALLDLATFAAGTYMRGIRLVHIPTTLLAMVDAALGGKGAVDWGPVKNLIGVFYQPAAILCDLSWLGTLPERVYRSAFAEVVKYGLALDGDFYSWVRENAKALLARDGGALEYAVYRSLQLKAGVVEVDEFEERGVRQVLNVGHTVGHAVERVLGLLHGEAVAVGMVAELRLSSELGYLRESHVAEAAEVLSSLGLPTSVKATEQQLAEAAALVKFDKKRRGGHIYIPLVVRPGRWILEKIAVEEVEKAVRYVLRQGG.

Residues 86 to 90 (GALLD), 110 to 111 (TT), Lys-123, and Lys-132 contribute to the NAD(+) site. 3 residues coordinate Zn(2+): Glu-165, His-229, and His-243.

The protein belongs to the sugar phosphate cyclases superfamily. Dehydroquinate synthase family. Co(2+) serves as cofactor. Zn(2+) is required as a cofactor. The cofactor is NAD(+).

The protein localises to the cytoplasm. It carries out the reaction 7-phospho-2-dehydro-3-deoxy-D-arabino-heptonate = 3-dehydroquinate + phosphate. Its pathway is metabolic intermediate biosynthesis; chorismate biosynthesis; chorismate from D-erythrose 4-phosphate and phosphoenolpyruvate: step 2/7. Its function is as follows. Catalyzes the conversion of 3-deoxy-D-arabino-heptulosonate 7-phosphate (DAHP) to dehydroquinate (DHQ). This Pyrobaculum neutrophilum (strain DSM 2338 / JCM 9278 / NBRC 100436 / V24Sta) (Thermoproteus neutrophilus) protein is 3-dehydroquinate synthase.